A 329-amino-acid polypeptide reads, in one-letter code: Elongation factor Ts (329 aa).

Residues 79-82 (TDFV) are involved in Mg(2+) ion dislocation from EF-Tu.

It belongs to the EF-Ts family.

It is found in the cytoplasm. Its function is as follows. Associates with the EF-Tu.GDP complex and induces the exchange of GDP to GTP. It remains bound to the aminoacyl-tRNA.EF-Tu.GTP complex up to the GTP hydrolysis stage on the ribosome. The polypeptide is Elongation factor Ts (Parabacteroides distasonis (strain ATCC 8503 / DSM 20701 / CIP 104284 / JCM 5825 / NCTC 11152)).